The chain runs to 631 residues: DNA mismatch repair protein MutL (631 aa).

It belongs to the DNA mismatch repair MutL/HexB family.

This protein is involved in the repair of mismatches in DNA. It is required for dam-dependent methyl-directed DNA mismatch repair. May act as a 'molecular matchmaker', a protein that promotes the formation of a stable complex between two or more DNA-binding proteins in an ATP-dependent manner without itself being part of a final effector complex. This is DNA mismatch repair protein MutL from Mannheimia succiniciproducens (strain KCTC 0769BP / MBEL55E).